A 433-amino-acid chain; its full sequence is MRNLLRGMLVVICCMAGIVMADEKNILVTSGSDRATPIAVVPFGFQGGAVLPDDMAEIIGNDLRNSGYYSPIPKQNMISQPSQPSEIIFRDWKAVGAQYMMVGSIVPAGGRLQVQWALFNVATEQKVADGSVSGTTEQLRDMAHYISDQSFEKLTGIKGAFSTRLLYVTAERFSEKNTRYTLQRSDYDGARAVTLLQSREPILSPRFAPDGKRIAYVSFEQKRPRIFMQNIDTGRREQITNFEGLNGAPAWSPDGNRLAFVLSKDGNPDIYVMNLGSRQITRVTAGPGINTEPYWGKDGSTIYFTSDRGGKPQIYKTSAGGGGAERVTFVGNYNANPKLSADEKTLVMIHRQDGFTNFKVAAQDLQRGSVKILTDSTLDESPTVAPNGTMVIYATRQQGRGVLMLVSINGRVRLPLPTAQGEVREPSWSPYLN.

A signal peptide spans Met-1–Ala-21.

The protein belongs to the TolB family. The Tol-Pal system is composed of five core proteins: the inner membrane proteins TolA, TolQ and TolR, the periplasmic protein TolB and the outer membrane protein Pal. They form a network linking the inner and outer membranes and the peptidoglycan layer.

Its subcellular location is the periplasm. Its function is as follows. Part of the Tol-Pal system, which plays a role in outer membrane invagination during cell division and is important for maintaining outer membrane integrity. The sequence is that of Tol-Pal system protein TolB from Pseudomonas fluorescens (strain Pf0-1).